A 496-amino-acid chain; its full sequence is PE-PGRS family protein PE_PGRS1 (496 aa).

Residues 4–94 form the PE domain; the sequence is LITSPATVAA…VCYAAAETAN (91 aa). Positions 461 to 480 are disordered; the sequence is LIGNGGDGGPGMFGGPGGAG.

It belongs to the mycobacterial PE family. PGRS subfamily.

Its subcellular location is the secreted. The protein resides in the cell wall. It is found in the host mitochondrion. When expressed in host mitochondria, induces mitochondrial stress which results in mitochondrial membrane depolarization, up-regulation of mitochondrial superoxides and release of cytochrome-C in the cytoplasm. The cytochrome-C in cytoplasm triggers the activation of caspase-9, caspase-3 and caspase-7, leading to the apoptosis of host macrophages. Being a late expressing protein, apoptosis induction by PE_PGRS1 may facilitate the M.tuberculosis survival and silent expansion of its niche at the site of granuloma. Its function is as follows. When expressed in THP-1 macrophages, promotes the survival of mycobacteria within macrophages after a 24- to 48-hour infection by blocking endoplasmic reticulum stress and inhibiting host cell apoptosis. Can chelate excessive intracellular calcium in THP-1 macrophages, which reduces the concentration of intracellular free Ca(2+) and blocks the PERK-eIF2alpha-ATF4 axis, thereby inhibiting the endoplasmic reticulum stress caused by infection. It also reduces the apoptosis of THP-1 macrophages by decreasing the activation of caspase-3 and caspase-9. This chain is PE-PGRS family protein PE_PGRS1, found in Mycobacterium tuberculosis (strain ATCC 25618 / H37Rv).